Consider the following 300-residue polypeptide: Transcription initiation factor IIB 1 (300 aa).

A TFIIB-type zinc finger spans residues 3-34 (GKRVCPVCGSTEFIYDPSRGEIVCKVCGYVIE). Residues Cys7, Cys10, Cys26, and Cys29 each contribute to the Zn(2+) site. Repeat copies occupy residues 114 to 197 (SELD…ARHL) and 210 to 291 (DYVN…ELVE).

Belongs to the TFIIB family.

Its function is as follows. Stabilizes TBP binding to an archaeal box-A promoter. Also responsible for recruiting RNA polymerase II to the pre-initiation complex (DNA-TBP-TFIIB). In Thermococcus kodakarensis (strain ATCC BAA-918 / JCM 12380 / KOD1) (Pyrococcus kodakaraensis (strain KOD1)), this protein is Transcription initiation factor IIB 1.